The chain runs to 389 residues: LL-diaminopimelate aminotransferase (389 aa).

Substrate contacts are provided by tyrosine 16 and glycine 41. Pyridoxal 5'-phosphate is bound by residues tyrosine 70, 104-105, tyrosine 129, asparagine 179, tyrosine 210, and 239-241; these read SK and SLS. Substrate contacts are provided by lysine 105, tyrosine 129, and asparagine 179. Lysine 242 bears the N6-(pyridoxal phosphate)lysine mark. Arginine 250 contacts pyridoxal 5'-phosphate. Arginine 369 is a substrate binding site.

This sequence belongs to the class-I pyridoxal-phosphate-dependent aminotransferase family. LL-diaminopimelate aminotransferase subfamily. As to quaternary structure, homodimer. The cofactor is pyridoxal 5'-phosphate.

It catalyses the reaction (2S,6S)-2,6-diaminopimelate + 2-oxoglutarate = (S)-2,3,4,5-tetrahydrodipicolinate + L-glutamate + H2O + H(+). Its pathway is amino-acid biosynthesis; L-lysine biosynthesis via DAP pathway; LL-2,6-diaminopimelate from (S)-tetrahydrodipicolinate (aminotransferase route): step 1/1. Involved in the synthesis of meso-diaminopimelate (m-DAP or DL-DAP), required for both lysine and peptidoglycan biosynthesis. Catalyzes the direct conversion of tetrahydrodipicolinate to LL-diaminopimelate. This is LL-diaminopimelate aminotransferase from Nitratidesulfovibrio vulgaris (strain DSM 19637 / Miyazaki F) (Desulfovibrio vulgaris).